We begin with the raw amino-acid sequence, 309 residues long: Porphobilinogen deaminase (309 aa).

Cys241 is modified (S-(dipyrrolylmethanemethyl)cysteine).

The protein belongs to the HMBS family. As to quaternary structure, monomer. It depends on dipyrromethane as a cofactor.

It carries out the reaction 4 porphobilinogen + H2O = hydroxymethylbilane + 4 NH4(+). It functions in the pathway porphyrin-containing compound metabolism; protoporphyrin-IX biosynthesis; coproporphyrinogen-III from 5-aminolevulinate: step 2/4. Functionally, tetrapolymerization of the monopyrrole PBG into the hydroxymethylbilane pre-uroporphyrinogen in several discrete steps. This is Porphobilinogen deaminase from Geobacillus kaustophilus (strain HTA426).